The chain runs to 695 residues: Interleukin-1 receptor accessory protein-like 1 (695 aa).

A signal peptide spans 1–24; it reads MKAPIPHLILLYATFTQSLKVVTK. In terms of domain architecture, Ig-like C2-type 1 spans 25 to 134; the sequence is RGSADGCTDW…YCMKVSISLT (110 aa). Residues 25–357 are Extracellular-facing; the sequence is RGSADGCTDW…LLHKRELMYT (333 aa). Disulfide bonds link Cys31-Cys126 and Cys53-Cys118. 3 N-linked (GlcNAc...) asparagine glycosylation sites follow: Asn63, Asn122, and Asn138. Disulfide bonds link Cys143/Cys185 and Cys164/Cys216. 2 Ig-like C2-type domains span residues 143 to 232 and 242 to 350; these read CYNS…TELT and PKLL…VLLH. Asn213, Asn264, and Asn331 each carry an N-linked (GlcNAc...) asparagine glycan. A disulfide bridge connects residues Cys267 and Cys334. Residues 358-378 traverse the membrane as a helical segment; sequence VELAGGLGAILLLLICSVTIY. Residues 379-695 are Cytoplasmic-facing; that stretch reads KCYKIEIMLF…RETSISSVIW (317 aa). A TIR domain is found at 403–558; that stretch reads KDYDAYLSYT…KFWKRLQYEM (156 aa). The active site involves Glu490. The interval 548-643 is interaction with NCS1; it reads SKFWKRLQYE…TGTLPLTSIG (96 aa). A disordered region spans residues 657 to 679; that stretch reads NGQRPQTKSNREPNPDEAHTNSA. Positions 665–675 are enriched in basic and acidic residues; it reads SNREPNPDEAH.

Belongs to the interleukin-1 receptor family. Homodimer. Interacts (calcium-independent) with NCS1/FREQ. Interacts (via the first immunoglobilin domain) with PTPRD (via the second immunoglobilin domain); this interaction is PTPRD-splicing-dependent and induces pre- and post-synaptic differentiation of neurons and is required for IL1RAPL1-mediated synapse formation. In terms of tissue distribution, detected in total brain extracts, olfactory bulb, hippocampus and striatum (at protein level).

It is found in the cell membrane. Its subcellular location is the cytoplasm. The protein resides in the cell projection. It localises to the axon. The protein localises to the dendrite. The catalysed reaction is NAD(+) + H2O = ADP-D-ribose + nicotinamide + H(+). In terms of biological role, may regulate secretion and presynaptic differentiation through inhibition of the activity of N-type voltage-gated calcium channel. May activate the MAP kinase JNK. Plays a role in neurite outgrowth. During dendritic spine formation can bidirectionally induce pre- and post-synaptic differentiation of neurons by trans-synaptically binding to PTPRD. This chain is Interleukin-1 receptor accessory protein-like 1 (Il1rapl1), found in Mus musculus (Mouse).